Reading from the N-terminus, the 1052-residue chain is Eukaryotic translation initiation factor 3 subunit A (1052 aa).

In terms of domain architecture, PCI spans 325–505 (IQYAASAVLL…GSLHFNNNIF (181 aa)). Coiled coils occupy residues 568–712 (REHV…RLRE) and 769–882 (EKTA…SAQT). Composition is skewed to basic and acidic residues over residues 570–600 (HVSN…EQMQ) and 793–874 (KIRL…EQEK). Disordered regions lie at residues 570-606 (HVSN…HQNQ) and 793-1052 (KIRL…DDKN). Polar residues-rich tracts occupy residues 875–887 (LSNL…QPTW) and 895–906 (APTTAAPSSMRV). 4 stretches are compositionally biased toward basic and acidic residues: residues 942-952 (DRGDRAPRDTG), 960-970 (DRGDRAPRDTG), 979-1013 (RAPR…ERRA), and 1037-1052 (GSER…DDKN).

It belongs to the eIF-3 subunit A family. In terms of assembly, component of the eukaryotic translation initiation factor 3 (eIF-3) complex.

The protein localises to the cytoplasm. Its function is as follows. RNA-binding component of the eukaryotic translation initiation factor 3 (eIF-3) complex, which is involved in protein synthesis of a specialized repertoire of mRNAs and, together with other initiation factors, stimulates binding of mRNA and methionyl-tRNAi to the 40S ribosome. The eIF-3 complex specifically targets and initiates translation of a subset of mRNAs involved in cell proliferation. This Monosiga brevicollis (Choanoflagellate) protein is Eukaryotic translation initiation factor 3 subunit A.